The chain runs to 265 residues: MKELHKTSFLESLLIQKRVIGALLMREIITRYGRNNIGFLWLFVEPLLLTLVMVLMWKFFRMHNVSALNIVAFTLTGYPMMMMWRNASNHAIGSISANTSLLYHRNVRVLDTIFARMLLEIAGATIAQVVIMFALVIIGWIDVPADIFYMLLAWLLMAMFAVGLGLVICSVAFHFEPFGKVWSTISFVMMPLSGVFFFVHNLPQQLQHYVLMIPMVHGTEMFRAGYFGDSVTTYENPWYILLCNLVLLLLGLAVVARFSKGVEPQ.

6 helical membrane-spanning segments follow: residues 37-57 (IGFL…VLMW), 64-84 (NVSA…MMMW), 121-141 (IAGA…IGWI), 147-167 (IFYM…LGLV), 178-198 (FGKV…VFFF), and 236-256 (NPWY…AVVA). Residues 37–258 (IGFLWLFVEP…LLGLAVVARF (222 aa)) form the ABC transmembrane type-2 domain.

Belongs to the ABC-2 integral membrane protein family.

Its subcellular location is the cell inner membrane. May form an ATP-driven capsule polysaccharide export apparatus, in association with the CtrB and CtrD proteins. The sequence is that of Capsule polysaccharide export inner-membrane protein CtrC (ctrC) from Neisseria meningitidis serogroup A / serotype 4A (strain DSM 15465 / Z2491).